A 178-amino-acid chain; its full sequence is Large ribosomal subunit protein uL6 (178 aa).

This sequence belongs to the universal ribosomal protein uL6 family. As to quaternary structure, part of the 50S ribosomal subunit.

In terms of biological role, this protein binds to the 23S rRNA, and is important in its secondary structure. It is located near the subunit interface in the base of the L7/L12 stalk, and near the tRNA binding site of the peptidyltransferase center. The polypeptide is Large ribosomal subunit protein uL6 (Lactiplantibacillus plantarum (strain ATCC BAA-793 / NCIMB 8826 / WCFS1) (Lactobacillus plantarum)).